We begin with the raw amino-acid sequence, 467 residues long: Glutamate--tRNA ligase (467 aa).

A 'HIGH' region motif is present at residues 9–19; that stretch reads PSPTGYLHIGG. A 'KMSKS' region motif is present at residues 237–241; it reads KLSKR. Lys240 contacts ATP.

It belongs to the class-I aminoacyl-tRNA synthetase family. Glutamate--tRNA ligase type 1 subfamily. In terms of assembly, monomer.

The protein localises to the cytoplasm. It catalyses the reaction tRNA(Glu) + L-glutamate + ATP = L-glutamyl-tRNA(Glu) + AMP + diphosphate. Functionally, catalyzes the attachment of glutamate to tRNA(Glu) in a two-step reaction: glutamate is first activated by ATP to form Glu-AMP and then transferred to the acceptor end of tRNA(Glu). This Xylella fastidiosa (strain 9a5c) protein is Glutamate--tRNA ligase.